Here is a 138-residue protein sequence, read N- to C-terminus: Putative pre-16S rRNA nuclease (138 aa).

This sequence belongs to the YqgF nuclease family.

The protein resides in the cytoplasm. Could be a nuclease involved in processing of the 5'-end of pre-16S rRNA. This is Putative pre-16S rRNA nuclease from Karelsulcia muelleri (strain GWSS) (Sulcia muelleri).